Consider the following 294-residue polypeptide: Probable endonuclease 4 (294 aa).

Zn(2+) is bound by residues histidine 78, histidine 118, glutamate 157, aspartate 191, histidine 194, histidine 228, aspartate 241, histidine 243, and glutamate 273.

This sequence belongs to the AP endonuclease 2 family. The cofactor is Zn(2+).

It carries out the reaction Endonucleolytic cleavage to 5'-phosphooligonucleotide end-products.. Its function is as follows. Endonuclease IV plays a role in DNA repair. It cleaves phosphodiester bonds at apurinic or apyrimidinic (AP) sites, generating a 3'-hydroxyl group and a 5'-terminal sugar phosphate. The protein is Probable endonuclease 4 of Streptomyces coelicolor (strain ATCC BAA-471 / A3(2) / M145).